A 209-amino-acid polypeptide reads, in one-letter code: MRTVVPFDPRDPKSRLAEFFADAEERRGFAYAMLADVLGAVRDAGGDPVVVATAPVSRPVDAPVTVDDRALSTAVAAAIADGPLPTAVVMADLALATPDAIRRVFAASGDVVLAPGSGGGTNVVLARTADVPVSYHGVSFRDHVTAAERAGLTVTTVDSFRLAADVDDASDLVDVFVHNTRRTREWLIAGGWRLAVDDGTPTVVREPND.

This sequence belongs to the CofC family. In terms of assembly, homodimer.

It carries out the reaction (2S)-2-phospholactate + GTP + H(+) = (2S)-lactyl-2-diphospho-5'-guanosine + diphosphate. It functions in the pathway cofactor biosynthesis; coenzyme F420 biosynthesis. Its function is as follows. Guanylyltransferase that catalyzes the activation of (2S)-2-phospholactate (2-PL) as (2S)-lactyl-2-diphospho-5'-guanosine, via the condensation of 2-PL with GTP. It is involved in the biosynthesis of coenzyme F420, a hydride carrier cofactor. The polypeptide is 2-phospho-L-lactate guanylyltransferase (Halobacterium salinarum (strain ATCC 29341 / DSM 671 / R1)).